The primary structure comprises 690 residues: MFKVYKKEIEVAGKKISLETGKVARQADGAIIASCGETVILATVVGAKKVNPDMDYFPLSVNYQEKYYAGGKIPGGYFKREARPTESEQLISRLIDRPIRPLFPSEFKNEVQLLPTVISYDKDNQPDILAITASSAALAISGMPFMGPVGASRVGLVDGKYILNPSKAELENSTLDLVVAGTKDAVLMVESETSGLTEEVMLDAVKFGHEGFVPVIEMIEELAKECRKPEWTVEKKDLSEVKKKLEENFTEDLTKAFATIDKQDRSNQISEISDKAKQLFADDENYSDFNVNDELKNLEKKIVRTDILKNKKRIDGRGLADVRAIECEVGVLPRTHGSALFTRGETQAIVVTTLGTSDDEQRLESLDGQHRERFMLHYNFPPFSVGETGRIGTGRREVGHGKLAWRAINSSLPPKEEFPYTFRIVSEITESNGSSSMASVCGASLALMDAGVPIKEPVAGIAMGLIKEGDDFSVLSDILGDEDHLGDMDFKVAGTKDGITSLQMDIKITGITFEIMEQALKQAKEGRIHILGEMNKALSESRADVGEHTPKMEQITVDKKDIAAVIGKGGATIREIVEKSGAKLDVNDEGVVTVAAPDEESRNIAMQMIKDITAKAELNKIYSGKVMKIMEFGAFVNFLGKQDGLVHISELATKRVEKVTDIVKEGDEVKVKVIGFDRGKVKLSMKQAAE.

2 residues coordinate Mg(2+): Asp-483 and Asp-489. The 60-residue stretch at 550 to 609 folds into the KH domain; it reads PKMEQITVDKKDIAAVIGKGGATIREIVEKSGAKLDVNDEGVVTVAAPDEESRNIAMQMI. The S1 motif domain occupies 619–686; it reads NKIYSGKVMK…DRGKVKLSMK (68 aa).

It belongs to the polyribonucleotide nucleotidyltransferase family. Mg(2+) is required as a cofactor.

Its subcellular location is the cytoplasm. It carries out the reaction RNA(n+1) + phosphate = RNA(n) + a ribonucleoside 5'-diphosphate. Involved in mRNA degradation. Catalyzes the phosphorolysis of single-stranded polyribonucleotides processively in the 3'- to 5'-direction. This Pelagibacter ubique (strain HTCC1062) protein is Polyribonucleotide nucleotidyltransferase.